A 202-amino-acid chain; its full sequence is Inner membrane-spanning protein YciB (202 aa).

Helical transmembrane passes span 3–23 (ILFD…AGGN), 46–66 (ILLA…WVWM), 73–93 (TMLW…LFFH), 100–120 (WKPT…AVIF), 145–165 (LAWA…AYNF), and 173–193 (FKLF…GFYL).

The protein belongs to the YciB family.

It is found in the cell inner membrane. In terms of biological role, plays a role in cell envelope biogenesis, maintenance of cell envelope integrity and membrane homeostasis. The protein is Inner membrane-spanning protein YciB of Aromatoleum aromaticum (strain DSM 19018 / LMG 30748 / EbN1) (Azoarcus sp. (strain EbN1)).